The primary structure comprises 269 residues: MKKIYVLSDSTGETAERVVRAALSQFGGSDVRIVRLAKVCNQQEVQQAVATVTADEGLLVYTLVDSSLAVAVHTIAEEHGLMAFDLLSPLLHSLSVFLGTVAQSTPGLLHQIDTDYFRRMEAVNFTVKHDDGQENRGLVKADLVLVGVSRSSKTPLSMYLANKGYKVANVPLVKGIDPPEELEAIDPSKVVGLLISPKRLVEIRTSRLVNMGQSMKNSYADYEKVEDEIAFCRQYYRRHPGWLIIDVTCKSVEESASEILRRLVGQFAE.

147–154 (GVSRSSKT) contributes to the ADP binding site.

Belongs to the pyruvate, phosphate/water dikinase regulatory protein family. PDRP subfamily.

It catalyses the reaction N(tele)-phospho-L-histidyl/L-threonyl-[pyruvate, phosphate dikinase] + ADP = N(tele)-phospho-L-histidyl/O-phospho-L-threonyl-[pyruvate, phosphate dikinase] + AMP + H(+). It carries out the reaction N(tele)-phospho-L-histidyl/O-phospho-L-threonyl-[pyruvate, phosphate dikinase] + phosphate + H(+) = N(tele)-phospho-L-histidyl/L-threonyl-[pyruvate, phosphate dikinase] + diphosphate. Functionally, bifunctional serine/threonine kinase and phosphorylase involved in the regulation of the pyruvate, phosphate dikinase (PPDK) by catalyzing its phosphorylation/dephosphorylation. This is Putative pyruvate, phosphate dikinase regulatory protein from Trichlorobacter lovleyi (strain ATCC BAA-1151 / DSM 17278 / SZ) (Geobacter lovleyi).